The following is a 124-amino-acid chain: Fluoride-specific ion channel FluC 2 (124 aa).

3 helical membrane passes run 36-56 (TFLI…YLAF), 66-86 (LFVM…SLDT), and 100-120 (LYAI…LALV). Residues glycine 74 and threonine 77 each coordinate Na(+).

It belongs to the fluoride channel Fluc/FEX (TC 1.A.43) family.

It is found in the cell inner membrane. It catalyses the reaction fluoride(in) = fluoride(out). Na(+) is not transported, but it plays an essential structural role and its presence is essential for fluoride channel function. Fluoride-specific ion channel. Important for reducing fluoride concentration in the cell, thus reducing its toxicity. This Nitrobacter hamburgensis (strain DSM 10229 / NCIMB 13809 / X14) protein is Fluoride-specific ion channel FluC 2.